Consider the following 273-residue polypeptide: Large ribosomal subunit protein uL2cz/uL2cy (273 aa).

Disordered regions lie at residues 1–24 (MAIH…QAKS) and 224–254 (NPVD…PALG).

It belongs to the universal ribosomal protein uL2 family. Part of the 50S ribosomal subunit.

The protein resides in the plastid. It localises to the chloroplast. This chain is Large ribosomal subunit protein uL2cz/uL2cy (rpl2-A), found in Nymphaea alba (White water-lily).